The sequence spans 240 residues: Phosphoenolpyruvate guanylyltransferase (240 aa).

Phosphoenolpyruvate contacts are provided by Thr161, Gly178, and Ser181.

This sequence belongs to the CofC family.

It catalyses the reaction phosphoenolpyruvate + GTP + H(+) = enolpyruvoyl-2-diphospho-5'-guanosine + diphosphate. It participates in cofactor biosynthesis; coenzyme F420 biosynthesis. Guanylyltransferase that catalyzes the activation of phosphoenolpyruvate (PEP) as enolpyruvoyl-2-diphospho-5'-guanosine, via the condensation of PEP with GTP. It is involved in the biosynthesis of coenzyme F420, a hydride carrier cofactor. This Rhodococcus opacus (strain B4) protein is Phosphoenolpyruvate guanylyltransferase.